A 278-amino-acid polypeptide reads, in one-letter code: SLAM family member 8 (278 aa).

The signal sequence occupies residues M1–S20. Residues V21 to D231 are Extracellular-facing. Residues N83 and N154 are each glycosylated (N-linked (GlcNAc...) asparagine). Positions P126–T213 constitute an Ig-like C2-type domain. A disulfide bridge connects residues C150 and C199. The helical transmembrane segment at V232–W252 threads the bilayer. Residues H253–V278 are Cytoplasmic-facing.

It localises to the membrane. May play a role in B-lineage commitment and/or modulation of signaling through the B-cell receptor. This Mus musculus (Mouse) protein is SLAM family member 8 (Slamf8).